The chain runs to 549 residues: Cation/acetate symporter ActP (549 aa).

13 helical membrane passes run 33-53, 77-97, 103-123, 148-168, 183-203, 206-226, 262-282, 303-323, 355-375, 404-424, 428-448, 464-484, and 493-513; these read WQAI…TYWA, LAIA…ALVF, GLIY…LIAE, ILSA…QMVG, IAVV…GMLA, WVQI…AFMV, ISAL…PHIL, GFMG…IMLV, LFLG…VAGL, VSKI…MLFE, IAFM…PIIL, GGWL…TIWV, and IFPY…GIWF.

Belongs to the sodium:solute symporter (SSF) (TC 2.A.21) family.

Its subcellular location is the cell inner membrane. Functionally, transports acetate. The polypeptide is Cation/acetate symporter ActP (Shigella boydii serotype 4 (strain Sb227)).